The chain runs to 431 residues: GTPase Obg (431 aa).

One can recognise an Obg domain in the interval 1 to 158; sequence MFVDQVKVDV…LTIRMELKVL (158 aa). An OBG-type G domain is found at 159–335; that stretch reads ADVGLVGFPS…LLAKTADLLD (177 aa). GTP-binding positions include 165–172, 190–194, 212–215, 282–285, and 316–318; these read GFPSVGKS, FTTLV, DLPG, TKMD, and SSI. The Mg(2+) site is built by S172 and T192. The region spanning 353–431 is the OCT domain; it reads YTTEADADFS…ILDYSFQFMD (79 aa).

This sequence belongs to the TRAFAC class OBG-HflX-like GTPase superfamily. OBG GTPase family. Monomer. It depends on Mg(2+) as a cofactor.

It localises to the cytoplasm. An essential GTPase which binds GTP, GDP and possibly (p)ppGpp with moderate affinity, with high nucleotide exchange rates and a fairly low GTP hydrolysis rate. Plays a role in control of the cell cycle, stress response, ribosome biogenesis and in those bacteria that undergo differentiation, in morphogenesis control. This is GTPase Obg from Lactiplantibacillus plantarum (strain ATCC BAA-793 / NCIMB 8826 / WCFS1) (Lactobacillus plantarum).